Consider the following 355-residue polypeptide: MSGQGKRLMVMAGGTGGHVFPGLAVAHYLMAQGWQVRWLGTADRMEADLVPKHGIEIDFIRISGLRGKGIKALIAAPLRIFNAWRQARAIMKAYKPDVVLGMGGYVSGPGGLAAWSLGIPVVLHEQNGIAGLTNKWLAKIATKVMQAFPGAFPNAEVVGNPVRTDVLALPLPQQRLAGREGPVRVLVVGGSQGARILNQTMPQVAAKLGDSVTIWHQSGKGSQQSVEQAYAEAGQPQHKVTEFIDDMAAAYAWADVVVCRSGALTVSEIAAAGLPALFVPFQHKDRQQYWNALPLEKAGAAKIIEQPQLSVDAVANTLAGWSRETLLTMAERARAASIPDATERVANEVSRAARA.

Residues 15–17 (TGG), Asn127, Arg163, Ser191, Ile244, 263–268 (ALTVSE), and Gln288 contribute to the UDP-N-acetyl-alpha-D-glucosamine site.

Belongs to the glycosyltransferase 28 family. MurG subfamily.

It is found in the cell inner membrane. It carries out the reaction di-trans,octa-cis-undecaprenyl diphospho-N-acetyl-alpha-D-muramoyl-L-alanyl-D-glutamyl-meso-2,6-diaminopimeloyl-D-alanyl-D-alanine + UDP-N-acetyl-alpha-D-glucosamine = di-trans,octa-cis-undecaprenyl diphospho-[N-acetyl-alpha-D-glucosaminyl-(1-&gt;4)]-N-acetyl-alpha-D-muramoyl-L-alanyl-D-glutamyl-meso-2,6-diaminopimeloyl-D-alanyl-D-alanine + UDP + H(+). Its pathway is cell wall biogenesis; peptidoglycan biosynthesis. In terms of biological role, cell wall formation. Catalyzes the transfer of a GlcNAc subunit on undecaprenyl-pyrophosphoryl-MurNAc-pentapeptide (lipid intermediate I) to form undecaprenyl-pyrophosphoryl-MurNAc-(pentapeptide)GlcNAc (lipid intermediate II). The protein is UDP-N-acetylglucosamine--N-acetylmuramyl-(pentapeptide) pyrophosphoryl-undecaprenol N-acetylglucosamine transferase of Shigella flexneri serotype 5b (strain 8401).